We begin with the raw amino-acid sequence, 495 residues long: Glycogen synthase (495 aa).

Residue Lys-15 coordinates ADP-alpha-D-glucose.

The protein belongs to the glycosyltransferase 1 family. Bacterial/plant glycogen synthase subfamily.

It catalyses the reaction [(1-&gt;4)-alpha-D-glucosyl](n) + ADP-alpha-D-glucose = [(1-&gt;4)-alpha-D-glucosyl](n+1) + ADP + H(+). It participates in glycan biosynthesis; glycogen biosynthesis. Synthesizes alpha-1,4-glucan chains using ADP-glucose. The protein is Glycogen synthase of Variovorax paradoxus (strain S110).